Consider the following 181-residue polypeptide: Large ribosomal subunit protein uL5 (181 aa).

Belongs to the universal ribosomal protein uL5 family. As to quaternary structure, part of the 50S ribosomal subunit; part of the 5S rRNA/L5/L18/L25 subcomplex. Contacts the 5S rRNA and the P site tRNA. Forms a bridge to the 30S subunit in the 70S ribosome.

In terms of biological role, this is one of the proteins that bind and probably mediate the attachment of the 5S RNA into the large ribosomal subunit, where it forms part of the central protuberance. In the 70S ribosome it contacts protein S13 of the 30S subunit (bridge B1b), connecting the 2 subunits; this bridge is implicated in subunit movement. Contacts the P site tRNA; the 5S rRNA and some of its associated proteins might help stabilize positioning of ribosome-bound tRNAs. The polypeptide is Large ribosomal subunit protein uL5 (Helicobacter hepaticus (strain ATCC 51449 / 3B1)).